The primary structure comprises 732 residues: Kell blood group glycoprotein (732 aa).

The interval 1-37 is disordered; the sequence is MEGGDQSEEEPRERSQAGGMGTLWSQESTPEERLPVE. Topologically, residues 1–47 are cytoplasmic; sequence MEGGDQSEEEPRERSQAGGMGTLWSQESTPEERLPVEGSRPWAVARR. Ser7 carries the post-translational modification Phosphoserine. A helical; Signal-anchor for type II membrane protein transmembrane segment spans residues 48-67; sequence VLTAILILGLLLCFSVLLFY. Residues 68 to 732 are Extracellular-facing; sequence NFQNCGPRPC…LNPSSRCQLW (665 aa). The 657-residue stretch at 76–732 folds into the Peptidase M13 domain; sequence PCETSVCLDL…LNPSSRCQLW (657 aa). Cys77 and Cys82 form a disulfide bridge. Residues Asn94 and Asn115 are each glycosylated (N-linked (GlcNAc...) asparagine). Disulfide bonds link Cys100–Cys717, Cys108–Cys682, Cys155–Cys410, and Cys610–Cys729. Asn191 carries an N-linked (GlcNAc...) asparagine; in KEL2 antigen glycan. Asn345 carries an N-linked (GlcNAc...) asparagine glycan. His581 lines the Zn(2+) pocket. Residue Glu582 is part of the active site. Position 585 (His585) interacts with Zn(2+). Residue Asn627 is glycosylated (N-linked (GlcNAc...) asparagine). Glu634 contributes to the Zn(2+) binding site. Asp638 serves as the catalytic Proton donor. The disordered stretch occupies residues 684 to 703; sequence KPSPQDSHDTHSPPHLRVHG.

Belongs to the peptidase M13 family. Heterodimer with XK; disulfide-linked. Requires Zn(2+) as cofactor. Post-translationally, N-glycosylated. As to expression, expressed at high levels in erythrocytes and testis (in Sertoli cells), and, at lower levels, in skeletal muscle, tonsils (in follicular dendritic cells), lymph node, spleen and appendix (at protein level). Also expressed in many adult and fetal nonerythroid tissues, including brain, spleen, lymph nodes and bone marrow.

It localises to the cell membrane. Functionally, zinc endopeptidase with endothelin-3-converting enzyme activity. Cleaves EDN1, EDN2 and EDN3, with a marked preference for EDN3. This is Kell blood group glycoprotein (KEL) from Homo sapiens (Human).